Consider the following 371-residue polypeptide: MPASITGLLRPDIAALEPYTPIVPLETLAERLGLPVERIIKLDANENPYGPSPRALAALAAVEHDAPHRYAIYPDPDHTRLRAALSRYVGQPPERIICGAGSDELIDLIMRAVLRPGDVMVDCPPTFAMYSFDAALYGARIVAVPRTEQFDVDVEGVAEAVERDGAKLLFLAAPNNPTGTPLARTTVERLLDLPIILAIDEAYAEFAGTSVIDLVGTRPNLVVLRTFSKWAGLAGLRIGYAAMHEDVITYLWKIKQPYNVNVAAEVAAVASLDDLDERLSTVARIVAERERLAAALAALPGIHVYPSAANFLLCRMTSGGAARARAIRDTLAQRGILIRYFNRPGIDDCIRISVGRPEQNDALLDVLKEVA.

Position 229 is an N6-(pyridoxal phosphate)lysine (K229).

The protein belongs to the class-II pyridoxal-phosphate-dependent aminotransferase family. Histidinol-phosphate aminotransferase subfamily. Homodimer. Requires pyridoxal 5'-phosphate as cofactor.

It carries out the reaction L-histidinol phosphate + 2-oxoglutarate = 3-(imidazol-4-yl)-2-oxopropyl phosphate + L-glutamate. Its pathway is amino-acid biosynthesis; L-histidine biosynthesis; L-histidine from 5-phospho-alpha-D-ribose 1-diphosphate: step 7/9. The sequence is that of Histidinol-phosphate aminotransferase from Roseiflexus castenholzii (strain DSM 13941 / HLO8).